A 126-amino-acid polypeptide reads, in one-letter code: Profilin (126 aa).

It belongs to the profilin family. Occurs in many kinds of cells as a complex with monomeric actin in a 1:1 ratio. As to expression, expressed in ovary and head.

The protein localises to the cytoplasm. Its subcellular location is the cytoskeleton. In terms of biological role, binds to actin and affects the structure of the cytoskeleton. At high concentrations, profilin prevents the polymerization of actin, whereas it enhances it at low concentrations. By binding to PIP2, it may inhibit the formation of IP3 and DG. This profilin is required for intercellular cytoplasm transport during Drosophila oogenesis. Function in neurons is essential for adult survival, and is important for climbing behavior and activity. The polypeptide is Profilin (chic) (Drosophila melanogaster (Fruit fly)).